The chain runs to 260 residues: Ribosomal RNA small subunit methyltransferase J (260 aa).

S-adenosyl-L-methionine contacts are provided by residues 125-126 and Asp179; that span reads ER.

It belongs to the methyltransferase superfamily. RsmJ family.

The protein resides in the cytoplasm. The enzyme catalyses guanosine(1516) in 16S rRNA + S-adenosyl-L-methionine = N(2)-methylguanosine(1516) in 16S rRNA + S-adenosyl-L-homocysteine + H(+). Its function is as follows. Specifically methylates the guanosine in position 1516 of 16S rRNA. This chain is Ribosomal RNA small subunit methyltransferase J, found in Pseudomonas entomophila (strain L48).